Consider the following 206-residue polypeptide: FMN-dependent NADH:quinone oxidoreductase 1 (206 aa).

Residues serine 9, serine 15–serine 17, and serine 139–glycine 142 contribute to the FMN site.

The protein belongs to the azoreductase type 1 family. As to quaternary structure, homodimer. It depends on FMN as a cofactor.

The enzyme catalyses 2 a quinone + NADH + H(+) = 2 a 1,4-benzosemiquinone + NAD(+). The catalysed reaction is N,N-dimethyl-1,4-phenylenediamine + anthranilate + 2 NAD(+) = 2-(4-dimethylaminophenyl)diazenylbenzoate + 2 NADH + 2 H(+). Functionally, quinone reductase that provides resistance to thiol-specific stress caused by electrophilic quinones. Also exhibits azoreductase activity. Catalyzes the reductive cleavage of the azo bond in aromatic azo compounds to the corresponding amines. This is FMN-dependent NADH:quinone oxidoreductase 1 from Cupriavidus pinatubonensis (strain JMP 134 / LMG 1197) (Cupriavidus necator (strain JMP 134)).